Here is a 49-residue protein sequence, read N- to C-terminus: uncharacterized protein (49 aa).

Residues methionine 1–methionine 22 form the signal peptide.

It localises to the secreted. This is an uncharacterized protein from Dictyostelium discoideum (Social amoeba).